A 181-amino-acid chain; its full sequence is Adenine phosphoribosyltransferase (181 aa).

It belongs to the purine/pyrimidine phosphoribosyltransferase family. Homodimer.

The protein resides in the cytoplasm. The enzyme catalyses AMP + diphosphate = 5-phospho-alpha-D-ribose 1-diphosphate + adenine. The protein operates within purine metabolism; AMP biosynthesis via salvage pathway; AMP from adenine: step 1/1. Catalyzes a salvage reaction resulting in the formation of AMP, that is energically less costly than de novo synthesis. The protein is Adenine phosphoribosyltransferase of Brucella abortus (strain S19).